Consider the following 573-residue polypeptide: PCNA-interacting partner (573 aa).

The interval 463–511 is disordered; that stretch reads VSEGAQPSVGKARLETSSENVHVDRSKDDKGPRKSTKRKLAKSKQPGVR. The segment covering 474 to 494 has biased composition (basic and acidic residues); the sequence is ARLETSSENVHVDRSKDDKGP. Positions 495-504 are enriched in basic residues; it reads RKSTKRKLAK.

The protein belongs to the PARI family. Interacts with RAD51 and PCNA. Interacts with PARP1. Interacts with TASOR. In terms of tissue distribution, present in testis (at protein level). Expressed in testis, gastrointestinal tract (jejunum, ileum, and colon) and immune system (thymus and spleen). Weakly expressed in lung, kidney, pituitary gland and muscle.

It is found in the cytoplasm. The protein localises to the nucleus. Required to suppress inappropriate homologous recombination, thereby playing a central role DNA repair and in the maintenance of genomic stability. Antagonizes homologous recombination by interfering with the formation of the RAD51-DNA homologous recombination structure. Positively regulate the poly(ADP-ribosyl)ation activity of PARP1; however such function may be indirect. Binds single-strand DNA and poly(A) homopolymers. This chain is PCNA-interacting partner (Parpbp), found in Rattus norvegicus (Rat).